The following is a 255-amino-acid chain: F-box only protein 44 (255 aa).

Residues 3-50 (VGNINELPENILLELFTHVPARQLLLNCRLVCSLWRDLIDLVTLWKRK) form the F-box domain. The 182-residue stretch at 71–252 (FYFLRSLHRN…VTNSSITIGP (182 aa)) folds into the FBA domain.

As to quaternary structure, part of a SCF (SKP1-cullin-F-box) protein ligase complex. Interacts with SKP1 and CUL1. Abundantly expressed in brain and kidney. Expressed at lower levels in heart, spleen and liver.

Substrate-recognition component of the SCF (SKP1-CUL1-F-box protein)-type E3 ubiquitin ligase complex. In Homo sapiens (Human), this protein is F-box only protein 44 (FBXO44).